The chain runs to 412 residues: FAD-dependent monooxygenase nscC (412 aa).

Positions 1–21 (MAKPQATVLIIGAGISGLTTS) are cleaved as a signal peptide. FAD contacts are provided by Glu35 and Ala46. An N-linked (GlcNAc...) asparagine glycan is attached at Asn92. Arg119 serves as a coordination point for FAD. N-linked (GlcNAc...) asparagine glycosylation is found at Asn170 and Asn231. 2 residues coordinate FAD: Asp326 and Gly339.

Belongs to the paxM FAD-dependent monooxygenase family. The cofactor is FAD.

It participates in secondary metabolite biosynthesis. Its function is as follows. FAD-dependent monooxygenase; part of the gene cluster that mediates the biosynthesis of neosartoricin B, a prenylated anthracenone that probably exhibits T-cell antiproliferative activity, suggestive of a physiological role as an immunosuppressive agent. The non-reducing polyketide synthase nscA probably synthesizes and cyclizes the decaketide backbone. The hydrolase nscB then mediates the product release through hydrolysis followed by spontaneous decarboxylation. The prenyltransferase nscD catalyzes the addition of the dimethylallyl group to the aromatic C5. The FAD-dependent monooxygenase nscC is then responsible for the stereospecific hydroxylation at C2. Neosartoricin B can be converted into two additional compounds neosartoricins C and D. Neosartoricin C is a spirocyclic compound that is cyclized through the attack of C3 hydroxyl on C14, followed by dehydration. On the other hand, neosartoricin D is a further cyclized compound in which attack of C2 on C14 in neosartoricin C results in the formation of the acetal-containing dioxabicyclo-octanone ring. Both of these compounds are novel and possibly represent related metabolites of the gene cluster. The protein is FAD-dependent monooxygenase nscC of Arthroderma otae (strain ATCC MYA-4605 / CBS 113480) (Microsporum canis).